The following is a 427-amino-acid chain: 3-phosphoshikimate 1-carboxyvinyltransferase (427 aa).

Residues K22, S23, and R27 each contribute to the 3-phosphoshikimate site. K22 lines the phosphoenolpyruvate pocket. Residues G96 and R124 each contribute to the phosphoenolpyruvate site. S169, S170, Q171, S197, D313, N336, and K340 together coordinate 3-phosphoshikimate. Q171 contacts phosphoenolpyruvate. The active-site Proton acceptor is the D313. Residues R344, R386, and K411 each contribute to the phosphoenolpyruvate site.

It belongs to the EPSP synthase family. As to quaternary structure, monomer.

The protein resides in the cytoplasm. It catalyses the reaction 3-phosphoshikimate + phosphoenolpyruvate = 5-O-(1-carboxyvinyl)-3-phosphoshikimate + phosphate. It participates in metabolic intermediate biosynthesis; chorismate biosynthesis; chorismate from D-erythrose 4-phosphate and phosphoenolpyruvate: step 6/7. Its function is as follows. Catalyzes the transfer of the enolpyruvyl moiety of phosphoenolpyruvate (PEP) to the 5-hydroxyl of shikimate-3-phosphate (S3P) to produce enolpyruvyl shikimate-3-phosphate and inorganic phosphate. This Shigella sonnei protein is 3-phosphoshikimate 1-carboxyvinyltransferase.